The following is a 524-amino-acid chain: Xanthotoxin 5-hydroxylase CYP82C4 (524 aa).

The chain crosses the membrane as a helical span at residues M1–F21. C463 provides a ligand contact to heme.

This sequence belongs to the cytochrome P450 family. Requires heme as cofactor. Expressed in both primary and lateral roots under iron-deficient conditions, except in apical root zones, and mostly in the root epidermal layer.

The protein resides in the membrane. The enzyme catalyses fraxetin + reduced [NADPH--hemoprotein reductase] + O2 = sideretin (reduced form) + oxidized [NADPH--hemoprotein reductase] + H2O + H(+). The catalysed reaction is xanthotoxin + reduced [NADPH--hemoprotein reductase] + O2 = 5-hydroxyxanthotoxin + oxidized [NADPH--hemoprotein reductase] + H2O + 2 H(+). It participates in phenylpropanoid metabolism. Can hydroxylate xanthotoxin (8-methoxypsoralen) to form 5-hydroxyxanthotoxin (5-hydroxy-8-methoxypsoralen) in vivo and in vitro. Involved in the early iron deficiency response, possibly through an IDE1-like mediated pathway. Involved in the pathway of sideretin biosynthesis from feruloyl CoA, a redox-active catecholic metabolite exuded by roots in response to iron deficiency in order to facilitate the uptake of iron; this pathway consists in the successive conversion from feruloyl CoA to scopoletin, from scopoletin to fraxetin and from fraxetin to sideretin. Catalyzes the biosynthesis of sideretin via fraxetin hydroxylation. The chain is Xanthotoxin 5-hydroxylase CYP82C4 from Arabidopsis thaliana (Mouse-ear cress).